The chain runs to 130 residues: Iron-sulfur cluster insertion protein ErpA 2 (130 aa).

Residues Cys58, Cys122, and Cys124 each coordinate iron-sulfur cluster.

It belongs to the HesB/IscA family. As to quaternary structure, homodimer. Iron-sulfur cluster is required as a cofactor.

Required for insertion of 4Fe-4S clusters for at least IspG. The chain is Iron-sulfur cluster insertion protein ErpA 2 from Methylococcus capsulatus (strain ATCC 33009 / NCIMB 11132 / Bath).